The sequence spans 118 residues: Putative ankyrin repeat protein R747 (118 aa).

Residues 70–99 form an ANK repeat; that stretch reads NCYYLLDYAIMKNDIPVIVTLIEKGANINR.

The protein is Putative ankyrin repeat protein R747 of Acanthamoeba polyphaga (Amoeba).